We begin with the raw amino-acid sequence, 347 residues long: Dolichyl-diphosphooligosaccharide--protein glycosyltransferase subunit TUSC3 (347 aa).

The signal sequence occupies residues 1-41 (MSARAAPSRRRQAGRRLRYLPTGSFPFLLLLLLLCIQLGGG). Over 42 to 196 (QKKKENLLAE…DVHIRVFRPP (155 aa)) the chain is Lumenal. One can recognise a Thioredoxin domain in the interval 59–187 (WSSRRSIFRM…LAKWIADRTD (129 aa)). A glycan (N-linked (GlcNAc...) asparagine) is linked at Asn-83. The cysteines at positions 99 and 102 are disulfide-linked. The helical transmembrane segment at 197–217 (NYSGTIALALLVSLVGGLLYL) threads the bilayer. The Cytoplasmic portion of the chain corresponds to 218-221 (RRNN). Residues 222 to 242 (LEFIYNKTGWAMVSLCIVFAM) traverse the membrane as a helical segment. Residues 243-276 (TSGQMWNHIRGPPYAHKNPHNGQVSYIHGSSQAQ) lie on the Lumenal side of the membrane. Residues 277–297 (FVAESHIILVLNAAITMGMVL) traverse the membrane as a helical segment. At 298–312 (LNEAATSKGDVGKRR) the chain is on the cytoplasmic side. A helical transmembrane segment spans residues 313-333 (IICLVGLGLVVFFFSFLLSIF). Over 334 to 347 (RSKYHGYPYSFLIK) the chain is Lumenal.

The protein belongs to the OST3/OST6 family. Accessory component of the STT3B-containing form of the oligosaccharyltransferase (OST) complex. OST exists in two different complex forms which contain common core subunits RPN1, RPN2, OST48, OST4, DAD1 and TMEM258, either STT3A or STT3B as catalytic subunits, and form-specific accessory subunits. OST can form stable complexes with the Sec61 complex or with both the Sec61 and TRAP complexes. The association of TUSC3 or MAGT1 with the STT3B-containing complex seems to be mutually exclusvice.

The protein resides in the endoplasmic reticulum membrane. It participates in protein modification; protein glycosylation. Its function is as follows. Acts as accessory component of the N-oligosaccharyl transferase (OST) complex which catalyzes the transfer of a high mannose oligosaccharide from a lipid-linked oligosaccharide donor to an asparagine residue within an Asn-X-Ser/Thr consensus motif in nascent polypeptide chains. Involved in N-glycosylation of STT3B-dependent substrates. Specifically required for the glycosylation of a subset of acceptor sites that are near cysteine residues; in this function seems to act redundantly with MAGT1. In its oxidized form proposed to form transient mixed disulfides with a glycoprotein substrate to facilitate access of STT3B to the unmodified acceptor site. Also has oxidoreductase-independent functions in the STT3B-containing OST complex possibly involving substrate recognition. Could indirectly play a role in Mg(2+) transport. The chain is Dolichyl-diphosphooligosaccharide--protein glycosyltransferase subunit TUSC3 (Tusc3) from Mus musculus (Mouse).